Here is a 26-residue protein sequence, read N- to C-terminus: Acyl carrier protein (26 aa).

Positions 2 to 26 constitute a Carrier domain; that stretch reads SDIEQRIKQAVAEQLGMRAEEIKNE.

Belongs to the acyl carrier protein (ACP) family. In terms of processing, 4'-phosphopantetheine is transferred from CoA to a specific serine of apo-ACP by AcpS. This modification is essential for activity because fatty acids are bound in thioester linkage to the sulfhydryl of the prosthetic group.

It localises to the cytoplasm. It participates in lipid metabolism; fatty acid biosynthesis. In terms of biological role, carrier of the growing fatty acid chain in fatty acid biosynthesis. The chain is Acyl carrier protein (acpP) from Acinetobacter calcoaceticus.